The following is a 275-amino-acid chain: Large ribosomal subunit protein uL2 (275 aa).

The disordered stretch occupies residues 221–275 (RGSAMTPRDHPHGGGEGKAPRGMPPKTPWGKPALGKRTRRNKKSDRFIIRRRYEA). A compositionally biased stretch (basic and acidic residues) spans 227–239 (PRDHPHGGGEGKA). Positions 254–263 (LGKRTRRNKK) are enriched in basic residues. Residues 264-275 (SDRFIIRRRYEA) are compositionally biased toward basic and acidic residues.

The protein belongs to the universal ribosomal protein uL2 family. As to quaternary structure, part of the 50S ribosomal subunit. Forms a bridge to the 30S subunit in the 70S ribosome.

Its function is as follows. One of the primary rRNA binding proteins. Required for association of the 30S and 50S subunits to form the 70S ribosome, for tRNA binding and peptide bond formation. It has been suggested to have peptidyltransferase activity; this is somewhat controversial. Makes several contacts with the 16S rRNA in the 70S ribosome. In Thermomicrobium roseum (strain ATCC 27502 / DSM 5159 / P-2), this protein is Large ribosomal subunit protein uL2.